The following is a 144-amino-acid chain: Large ribosomal subunit protein uL14 (144 aa).

The protein belongs to the universal ribosomal protein uL14 family. In terms of assembly, part of the 50S ribosomal subunit. Forms a cluster with proteins L3 and L24e, part of which may contact the 16S rRNA in 2 intersubunit bridges.

Functionally, binds to 23S rRNA. Forms part of two intersubunit bridges in the 70S ribosome. This Pyrobaculum aerophilum (strain ATCC 51768 / DSM 7523 / JCM 9630 / CIP 104966 / NBRC 100827 / IM2) protein is Large ribosomal subunit protein uL14.